The sequence spans 263 residues: Small ribosomal subunit protein eS4, Y isoform 2 (263 aa).

Residues 42-104 form the S4 RNA-binding domain; it reads LPLIVFLRNR…TGEHFRLVYN (63 aa).

The protein belongs to the eukaryotic ribosomal protein eS4 family.

This is Small ribosomal subunit protein eS4, Y isoform 2 (RPS4Y2) from Homo sapiens (Human).